The chain runs to 668 residues: Fe(2+) transporter FeoB (668 aa).

The region spanning 3 to 165 (SYEIALIGNP…KKAISIAVKD (163 aa)) is the FeoB-type G domain. GTP is bound at residue 10-17 (GNPNVGKS). The Mg(2+) site is built by Asn21, Ala22, Thr24, and Gly25. Residues 35 to 39 (GVTVE), 56 to 59 (DLPG), 116 to 119 (NKMD), and 145 to 147 (SAA) contribute to the GTP site. The next 8 helical transmembrane spans lie at 344–364 (VGAVLVFFPILAFLFFAISFL), 386–406 (LPGKAVISMVMGFGCNVPAIM), 418–438 (ILTILINPLLSCSARLPIYAL), 450–470 (VVILSMYALGVVLALITAFLF), 515–535 (IIVFGVILVWVLSVYGPSGYL), 574–594 (ALVFGIIAKEVVVGSLAMLYG), 613–633 (AYAFMAFSLIYLPCIATLAVI), and 643–663 (LFAVTYEMILAYVVALVISVI).

Belongs to the TRAFAC class TrmE-Era-EngA-EngB-Septin-like GTPase superfamily. FeoB GTPase (TC 9.A.8) family. As to quaternary structure, the crystallized N-terminal domain is a homodimer.

Its subcellular location is the cell membrane. In terms of biological role, probable transporter of a GTP-driven Fe(2+) uptake system, might be able to transport Fe(2+) into or out of the cell. The chain is Fe(2+) transporter FeoB from Methanocaldococcus jannaschii (strain ATCC 43067 / DSM 2661 / JAL-1 / JCM 10045 / NBRC 100440) (Methanococcus jannaschii).